The sequence spans 268 residues: Deoxyuridine 5'-triphosphate nucleotidohydrolase (268 aa).

Substrate is bound by residues Arg172–Ser174 and Phe263–Gly264.

The protein belongs to the dUTPase family. The cofactor is Mg(2+).

It catalyses the reaction dUTP + H2O = dUMP + diphosphate + H(+). In terms of biological role, involved in nucleotide metabolism: produces dUMP, the immediate precursor of thymidine nucleotides and decreases the intracellular concentration of dUTP to avoid uracil incorporation into viral DNA. The sequence is that of Deoxyuridine 5'-triphosphate nucleotidohydrolase from Suid herpesvirus 1 (strain Kaplan) (SuHV-1).